Here is a 333-residue protein sequence, read N- to C-terminus: cGAMP-activated phospholipase (333 aa).

Residues 10 to 191 (LALSGGGYRG…VGNAPGLFGL (182 aa)) form the PNPLA domain. Residues 14–19 (GGGYRG) carry the GXGXXG motif. The GXSXG motif lies at 46–50 (GTSAG). Residue serine 48 is the Nucleophile of the active site. The Proton acceptor role is filled by aspartate 178. Positions 178–180 (DGG) match the DGA/G motif.

Belongs to the patatin family.

The catalysed reaction is a 1,2-diacyl-sn-glycero-3-phosphocholine + H2O = a 2-acyl-sn-glycero-3-phosphocholine + a fatty acid + H(+). It carries out the reaction 1,2-di-(9Z-octadecenoyl)-sn-glycero-3-phosphoethanolamine + 2 H2O = sn-glycero-3-phosphoethanolamine + 2 (9Z)-octadecenoate + 2 H(+). With respect to regulation, phospholipase activity is specifically activated upon cGAMP binding, which is produced by the cognate cyclic nucleotide synthase encoded in the same operon. Is not activated by cyclic dinucleotides 2',3'-cGAMP, c-diAMP or 3',3'-c-diGMP. Functionally, effector phospholipase of a CBASS antiviral system. CBASS (cyclic oligonucleotide-based antiphage signaling system) provides immunity against bacteriophages. The CD-NTase protein (CdnA) synthesizes cyclic nucleotides in response to infection; these serve as specific second messenger signals. The signals activate a diverse range of effectors, leading to bacterial cell death and thus abortive phage infection. A type II-A(GA) CBASS system. Its function is as follows. Phospholipase that is activated upon binding to the cyclic dinucleotide (CDN) second messenger 3',3'-cyclic GMP-AMP (cGAMP). Degrades phospholipids in the cell membrane. In terms of biological role, the capV-cdnA-cap2-cap3 operon provides about 10(4)-fold protection in strain BWHPSA011 against infection by phage PaMx41. In P.aeruginosa strain PAO1 it confers protection against phages PaMx41 and JBD18 but not JBD67 (JBD18 and JBD67 do not replicate in BWHPSA011 / Pa011). When acb2 in JBD67 is deleted this CBASS operon then protects against JDB67 also. This CBASS system limits prophage induction of lysogenized JBD67 as well as viral lytic replication. This Pseudomonas aeruginosa (strain BWHPSA011 / Pa011) protein is cGAMP-activated phospholipase.